The chain runs to 159 residues: HSP70 co-chaperone SNL1 (159 aa).

Residues 1-12 (MSHNAMEHWKSK) are Perinuclear space-facing. Residues 13 to 35 (LSKTSTSTYVLLAVIAVVFLVTI) form a helical; Signal-anchor for type II membrane protein membrane-spanning segment. Topologically, residues 36-159 (RRPNGSKGKS…AMLKSLDSLK (124 aa)) are cytoplasmic. The tract at residues 39-64 (NGSKGKSSKKRASKKNKKGKNQFEKA) is disordered. Over residues 44–58 (KSSKKRASKKNKKGK) the composition is skewed to basic residues. Residues 73-159 (QIDNVSLRYG…AMLKSLDSLK (87 aa)) form the BAG domain.

As to quaternary structure, interacts with the HSP70 family members SSA1, SSA4, and SSB1. These interactions are strongly reduced by ADP and ATP.

Its subcellular location is the endoplasmic reticulum membrane. It localises to the nucleus membrane. Functionally, stimulator of ATPase activity of molecular chaperones of the HSP70 family (principally of the SSA class). Stimulation is important for HSP70-substrate complex dissociation after folding of newly synthesized or refolded proteins. SNL1 is probably involved in nuclear pore biogenesis and in particular the folding or refolding of misfolded NUP116, GLE2 and NIC96. This is HSP70 co-chaperone SNL1 (SNL1) from Saccharomyces cerevisiae (strain ATCC 204508 / S288c) (Baker's yeast).